A 67-amino-acid polypeptide reads, in one-letter code: DNA-directed RNA polymerase subunit omega (67 aa).

This sequence belongs to the RNA polymerase subunit omega family. The RNAP catalytic core consists of 2 alpha, 1 beta, 1 beta' and 1 omega subunit. When a sigma factor is associated with the core the holoenzyme is formed, which can initiate transcription.

The enzyme catalyses RNA(n) + a ribonucleoside 5'-triphosphate = RNA(n+1) + diphosphate. In terms of biological role, promotes RNA polymerase assembly. Latches the N- and C-terminal regions of the beta' subunit thereby facilitating its interaction with the beta and alpha subunits. In Burkholderia multivorans (strain ATCC 17616 / 249), this protein is DNA-directed RNA polymerase subunit omega.